Here is a 258-residue protein sequence, read N- to C-terminus: Imidazole glycerol phosphate synthase subunit HisF (258 aa).

Catalysis depends on residues aspartate 11 and aspartate 130.

This sequence belongs to the HisA/HisF family. Heterodimer of HisH and HisF.

It localises to the cytoplasm. It catalyses the reaction 5-[(5-phospho-1-deoxy-D-ribulos-1-ylimino)methylamino]-1-(5-phospho-beta-D-ribosyl)imidazole-4-carboxamide + L-glutamine = D-erythro-1-(imidazol-4-yl)glycerol 3-phosphate + 5-amino-1-(5-phospho-beta-D-ribosyl)imidazole-4-carboxamide + L-glutamate + H(+). Its pathway is amino-acid biosynthesis; L-histidine biosynthesis; L-histidine from 5-phospho-alpha-D-ribose 1-diphosphate: step 5/9. IGPS catalyzes the conversion of PRFAR and glutamine to IGP, AICAR and glutamate. The HisF subunit catalyzes the cyclization activity that produces IGP and AICAR from PRFAR using the ammonia provided by the HisH subunit. The protein is Imidazole glycerol phosphate synthase subunit HisF of Haemophilus influenzae (strain PittEE).